The sequence spans 965 residues: Collagenase ColQ1 (965 aa).

Residues 1 to 30 form the signal peptide; sequence MNKKSKINKVMLSISTMALSLGALQAPASA. The propeptide occupies 31-93; the sequence is EEKVPYNVLK…KAAVKQVKES (63 aa). Residues 94–366 form an activator domain region; that stretch reads YSMADLNKMN…AVEQITTNYN (273 aa). The segment at 94-765 is S1 metalloprotease domain; that stretch reads YSMADLNKMN…VFHGIAKDDG (672 aa). The segment at 376 to 645 is catalytic subdomain; it reads DLEKIRKEGK…MQQLIDNQDK (270 aa). Residue His-501 participates in Zn(2+) binding. Glu-502 is an active-site residue. Positions 505 and 533 each coordinate Zn(2+). The segment at 653 to 765 is helper subdomain; that stretch reads DDYLAEHAPK…VFHGIAKDDG (113 aa). The PKD domain maps to 769–850; sequence APTVNINGPY…ESKSETTVTV (82 aa). Residues 842-867 form a disordered region; that stretch reads SKSETTVTVKDGSLTESEPNNRPEEA. The segment covering 845–859 has biased composition (polar residues); it reads ETTVTVKDGSLTESE. A collagen-binding domain region spans residues 853–965; it reads GSLTESEPNN…GDGTYKLSVK (113 aa).

The protein belongs to the peptidase M9B family. Collagenase subfamily. Ca(2+) is required as a cofactor. The cofactor is Zn(2+).

Its subcellular location is the secreted. It catalyses the reaction Digestion of native collagen in the triple helical region at Xaa-|-Gly bonds. With synthetic peptides, a preference is shown for Gly at P3 and P1', Pro and Ala at P2 and P2', and hydroxyproline, Ala or Arg at P3'.. Strongly inhibited by EDTA. Not inhibited by E-64 and PMSF, broad-spectrum cysteine and serine protease inhibitors. Functionally, acts as a true collagenase, which is highly active and cleaves natively folded collagen. In vitro, can also cleave gelatin and the synthetic peptide FALGPA (furylacryloyl-Leu-Gly-Pro-Ala). Causes damage on dermal collagen (COL), resulting in gaps in the tissue, which might lead to an accelerated bacterial infiltration and penetration into deeper sites of the host. The sequence is that of Collagenase ColQ1 from Bacillus cereus (strain Q1).